Reading from the N-terminus, the 396-residue chain is Elongation factor Tu 1 (396 aa).

In terms of domain architecture, tr-type G spans 10–206 (KPHCNIGTIG…TVDDYIPQPD (197 aa)). The segment at 19-26 (GHVDHGKT) is G1. 19–26 (GHVDHGKT) provides a ligand contact to GTP. Threonine 26 lines the Mg(2+) pocket. The tract at residues 60-64 (GITIN) is G2. The G3 stretch occupies residues 81-84 (DCPG). GTP-binding positions include 81–85 (DCPGH) and 136–139 (NKVD). The segment at 136 to 139 (NKVD) is G4. The G5 stretch occupies residues 174-176 (SAK).

Belongs to the TRAFAC class translation factor GTPase superfamily. Classic translation factor GTPase family. EF-Tu/EF-1A subfamily. Monomer.

The protein resides in the cytoplasm. The catalysed reaction is GTP + H2O = GDP + phosphate + H(+). In terms of biological role, GTP hydrolase that promotes the GTP-dependent binding of aminoacyl-tRNA to the A-site of ribosomes during protein biosynthesis. The polypeptide is Elongation factor Tu 1 (Caulobacter sp. (strain K31)).